The chain runs to 341 residues: tRNA N6-adenosine threonylcarbamoyltransferase (341 aa).

Fe cation-binding residues include His-111 and His-115. Residues 134-138, Asp-167, Gly-180, and Asn-276 each bind substrate; that span reads LVSGG. Fe cation is bound at residue Asp-304.

This sequence belongs to the KAE1 / TsaD family. Requires Fe(2+) as cofactor.

The protein resides in the cytoplasm. It carries out the reaction L-threonylcarbamoyladenylate + adenosine(37) in tRNA = N(6)-L-threonylcarbamoyladenosine(37) in tRNA + AMP + H(+). Functionally, required for the formation of a threonylcarbamoyl group on adenosine at position 37 (t(6)A37) in tRNAs that read codons beginning with adenine. Is involved in the transfer of the threonylcarbamoyl moiety of threonylcarbamoyl-AMP (TC-AMP) to the N6 group of A37, together with TsaE and TsaB. TsaD likely plays a direct catalytic role in this reaction. The sequence is that of tRNA N6-adenosine threonylcarbamoyltransferase from Pseudomonas aeruginosa (strain ATCC 15692 / DSM 22644 / CIP 104116 / JCM 14847 / LMG 12228 / 1C / PRS 101 / PAO1).